The chain runs to 648 residues: MSESKVYPVKAHISNGALLDKAGYEAMYRASVQDPDAFWGEQGKIIDWMKPYTKVKNTSYDPGHVSIKWYEDGLLNVSANCLDRHLAQRGDKVAIIWEGDNPAEDRKLTYRELHAEVCKFSNVLKAQGVHRGDVVCLYMPMVPEAAIAMLACTRIGAVHSIVFGGFSPEALAGRIIDSGSSIVITADEGLRGGRPVPLKKNVDEALTNPDTRVSKVIVLKRTGGNVAWHNHRDIWWHEATAAASSDCPPEAMNAEDPLFVLYTSGSTGKPKGVLHTTGGYLVYATLTFKYVFDYHEEDIYWCTADVGWVTGHSYLVYGPLANGATTIMFEGVPNYPATNRMSQVVDKHQVTILYTAPTAIRALMAKGRDAVEGTSRQSLRIMGSVGEPINPEAWEWYYRTIGEERCPIVDTWWQTETGGILISPLPGVTDLKPGSATRPFFGVQPALVDNMGEPLEGATEGNLVITDSWPGQMRTVFGDHERFEQTYFSTFPGRYFTGDGARRDEDGYYWITGRVDDVLNVSGHRMGTAEIESALVAHPKIAEAAVVGVPHEIKGQGIYAYVTLIAGEEPSRELHKEVKEWVRKEIGAIATPDVIHWAEGLPKTRSGKIMRRILRKIATGETDSLGDISTLADPGVVDKLIREKSEAA.

CoA is bound by residues arginine 191–arginine 194, threonine 310, and asparagine 334. Residues glycine 386 to proline 388, aspartate 410 to threonine 415, aspartate 499, and arginine 514 contribute to the ATP site. Serine 522 contacts CoA. Position 525 (arginine 525) interacts with ATP. Residues valine 536, histidine 538, and isoleucine 541 each coordinate Mg(2+). Arginine 583 provides a ligand contact to CoA. Lysine 608 carries the N6-acetyllysine modification.

This sequence belongs to the ATP-dependent AMP-binding enzyme family. Mg(2+) serves as cofactor. Post-translationally, acetylated. Deacetylation by the SIR2-homolog deacetylase activates the enzyme.

The catalysed reaction is acetate + ATP + CoA = acetyl-CoA + AMP + diphosphate. Functionally, catalyzes the conversion of acetate into acetyl-CoA (AcCoA), an essential intermediate at the junction of anabolic and catabolic pathways. AcsA undergoes a two-step reaction. In the first half reaction, AcsA combines acetate with ATP to form acetyl-adenylate (AcAMP) intermediate. In the second half reaction, it can then transfer the acetyl group from AcAMP to the sulfhydryl group of CoA, forming the product AcCoA. The sequence is that of Acetyl-coenzyme A synthetase from Aeromonas salmonicida (strain A449).